A 330-amino-acid polypeptide reads, in one-letter code: Glucokinase (330 aa).

Belongs to the ROK (NagC/XylR) family.

The protein resides in the cytoplasm. The catalysed reaction is D-glucose + ATP = D-glucose 6-phosphate + ADP + H(+). The sequence is that of Glucokinase (glcK) from Halalkalibacterium halodurans (strain ATCC BAA-125 / DSM 18197 / FERM 7344 / JCM 9153 / C-125) (Bacillus halodurans).